An 89-amino-acid polypeptide reads, in one-letter code: MALLDFFLSRKKTTANIAKERLQIIVAERRRGDSEPHYLPQLKRDILEVICKYVQIDPEMVTVQLEQKGDDISVLELNVTLPEAEETPK.

It belongs to the MinE family.

In terms of biological role, prevents the cell division inhibition by proteins MinC and MinD at internal division sites while permitting inhibition at polar sites. This ensures cell division at the proper site by restricting the formation of a division septum at the midpoint of the long axis of the cell. The sequence is that of Cell division topological specificity factor from Pectobacterium carotovorum subsp. carotovorum (strain PC1).